The following is a 157-amino-acid chain: MRILGLDPGLARVGYGVLEVDEQRRNQPEMVDCGIISTDAGRGEGERMVEIARDLRQLLRLHRPDLAAVEKFFFYRSSNTIAVVQARGVLIMTLARFQIPTVEYPPMQIKLALAGSGHADKGEVQDAVMRELRLNERPKPDDAADALAVGLTAWFQR.

Active-site residues include Asp7, Glu70, and Asp142. Mg(2+) contacts are provided by Asp7, Glu70, and Asp142.

The protein belongs to the RuvC family. As to quaternary structure, homodimer which binds Holliday junction (HJ) DNA. The HJ becomes 2-fold symmetrical on binding to RuvC with unstacked arms; it has a different conformation from HJ DNA in complex with RuvA. In the full resolvosome a probable DNA-RuvA(4)-RuvB(12)-RuvC(2) complex forms which resolves the HJ. The cofactor is Mg(2+).

It localises to the cytoplasm. It catalyses the reaction Endonucleolytic cleavage at a junction such as a reciprocal single-stranded crossover between two homologous DNA duplexes (Holliday junction).. Functionally, the RuvA-RuvB-RuvC complex processes Holliday junction (HJ) DNA during genetic recombination and DNA repair. Endonuclease that resolves HJ intermediates. Cleaves cruciform DNA by making single-stranded nicks across the HJ at symmetrical positions within the homologous arms, yielding a 5'-phosphate and a 3'-hydroxyl group; requires a central core of homology in the junction. The consensus cleavage sequence is 5'-(A/T)TT(C/G)-3'. Cleavage occurs on the 3'-side of the TT dinucleotide at the point of strand exchange. HJ branch migration catalyzed by RuvA-RuvB allows RuvC to scan DNA until it finds its consensus sequence, where it cleaves and resolves the cruciform DNA. This is Crossover junction endodeoxyribonuclease RuvC from Synechococcus sp. (strain RCC307).